The following is a 1086-amino-acid chain: Auxin response factor 19 (1086 aa).

Residues 126–228 (FCKTLTASDT…QLMLGIRRAN (103 aa)) constitute a DNA-binding region (TF-B3). The segment covering 454–485 (PSKLLNFQSPNLSSANSQFNKPNTVNHISQQM) has biased composition (polar residues). 4 disordered regions span residues 454 to 504 (PSKL…QQQQ), 545 to 564 (QSPN…QSML), 624 to 647 (LSQN…QQLQ), and 659 to 788 (QQQS…SVFE). The span at 486-504 (QAQPAMVKSQQQQQQQQQQ) shows a compositional bias: low complexity. The span at 659-697 (QQQSIPPVSSSLQPQLSALQQTQSHQLQQLLSSQNQQPL) shows a compositional bias: low complexity. The span at 700–710 (GNNSFPASTFM) shows a compositional bias: polar residues. Low complexity predominate over residues 711 to 724 (QPPQIQVSPQQQGQ). Residues 747–771 (SCSTSPSANNTGHDNVSPTNFLSRN) are compositionally biased toward polar residues. Low complexity predominate over residues 772-785 (QQQGQAASVSASDS). The PB1 domain occupies 958–1051 (RTYTKVQKRG…EVQQMSLDGD (94 aa)).

Belongs to the ARF family. As to quaternary structure, homodimers and heterodimers. Interacts with the auxin-responsive protein IAA1. Binds to JMJ30. Binds to ATXR2 in the nucleus.

The protein resides in the nucleus. Functionally, auxin response factors (ARFs) are transcriptional factors that bind specifically to the DNA sequence 5'-TGTCTC-3' found in the auxin-responsive promoter elements (AuxREs). Could act as transcriptional activator or repressor. Formation of heterodimers with Aux/IAA proteins may alter their ability to modulate early auxin response genes expression. Involved in ethylene responses. Regulates lateral root formation through direct regulation of LBD16 and/or LBD29. Functionally redundant with ARF7. Involved in cellular dedifferentiation during callus formation on callus-inducing medium (CIM) and in an ATXR2-dependent manner. The chain is Auxin response factor 19 from Arabidopsis thaliana (Mouse-ear cress).